The chain runs to 430 residues: Sphingosine-1-phosphate phosphatase 1 (430 aa).

Positions 34–100 (GSPKAGEDAE…PRRAGSLRRN (67 aa)) are disordered. Ser-101 carries the phosphoserine modification. Thr-103 carries the post-translational modification Phosphothreonine. The next 4 helical transmembrane spans lie at 121–141 (FCFG…PFWI), 152–172 (LVII…IIRW), 193–213 (MPST…LLTY), and 216–236 (WQYP…LVCL). The segment at 167–175 (KDIIRWPRP) is phosphatase sequence motif I. Residues 194 to 197 (PSTH) are phosphatase sequence motif II. Catalysis depends on His-197, which acts as the Proton donor. Residues 237–248 (SRIYMGMHSILD) are phosphatase sequence motif III. The active-site Nucleophile is the His-244. The next 5 helical transmembrane spans lie at 246–266 (ILDV…FYPL), 279–299 (YAPL…FTLD), 311–331 (ILGS…LGIS), 348–368 (VTLF…VLFV), and 409–429 (YGTV…FIGI).

This sequence belongs to the type 2 lipid phosphate phosphatase family.

It localises to the endoplasmic reticulum membrane. The protein resides in the cell membrane. The enzyme catalyses sphinganine 1-phosphate + H2O = sphinganine + phosphate. The catalysed reaction is sphing-4-enine 1-phosphate + H2O = sphing-4-enine + phosphate. Specifically dephosphorylates sphingosine 1-phosphate (S1P), dihydro-S1P, and phyto-S1P. Does not act on ceramide 1-phosphate, lysophosphatidic acid or phosphatidic acid. Sphingosine-1-phosphate phosphatase activity is needed for efficient recycling of sphingosine into the sphingolipid synthesis pathway. Regulates the intracellular levels of the bioactive sphingolipid metabolite S1P that regulates diverse biological processes acting both as an extracellular receptor ligand or as an intracellular second messenger. Involved in efficient ceramide synthesis from exogenous sphingoid bases. Converts S1P to sphingosine, which is readily metabolized to ceramide via ceramide synthase. In concert with sphingosine kinase 2 (SphK2), recycles sphingosine into ceramide through a phosphorylation/dephosphorylation cycle. Regulates endoplasmic-to-Golgi trafficking of ceramides, resulting in the regulation of ceramide levels in the endoplasmic reticulum, preferentially long-chain ceramide species, and influences the anterograde membrane transport of both ceramide and proteins from the endoplasmic reticulum to the Golgi apparatus. The modulation of intracellular ceramide levels in turn regulates apoptosis. Via S1P levels, modulates resting tone, intracellular Ca(2+) and myogenic vasoconstriction in resistance arteries. Also involved in unfolded protein response (UPR) and ER stress-induced autophagy via regulation of intracellular S1P levels. Involved in the regulation of epidermal homeostasis and keratinocyte differentiation. The protein is Sphingosine-1-phosphate phosphatase 1 of Rattus norvegicus (Rat).